Reading from the N-terminus, the 833-residue chain is DNA ligase (833 aa).

NAD(+) contacts are provided by residues 35 to 39 (DADYD), 84 to 85 (SL), and glutamate 115. Lysine 117 (N6-AMP-lysine intermediate) is an active-site residue. 4 residues coordinate NAD(+): arginine 138, glutamate 175, lysine 292, and lysine 316. Positions 410, 413, 428, and 434 each coordinate Zn(2+). The BRCT domain maps to 750-833 (EKTGPLDGQT…AFLGDHGQQP (84 aa)).

This sequence belongs to the NAD-dependent DNA ligase family. LigA subfamily. The cofactor is Mg(2+). Mn(2+) serves as cofactor.

It catalyses the reaction NAD(+) + (deoxyribonucleotide)n-3'-hydroxyl + 5'-phospho-(deoxyribonucleotide)m = (deoxyribonucleotide)n+m + AMP + beta-nicotinamide D-nucleotide.. DNA ligase that catalyzes the formation of phosphodiester linkages between 5'-phosphoryl and 3'-hydroxyl groups in double-stranded DNA using NAD as a coenzyme and as the energy source for the reaction. It is essential for DNA replication and repair of damaged DNA. The polypeptide is DNA ligase (Xanthomonas axonopodis pv. citri (strain 306)).